The chain runs to 189 residues: Adenylate kinase (189 aa).

Position 12-17 (12-17 (GSGKTT)) interacts with ATP. Residues 33 to 62 (STGDLLRAEVASGSELGKLIDGFISKGNLV) form an NMP region. Residues Thr-34, Arg-39, 60–62 (NLV), 87–90 (GYPR), and Gln-94 contribute to the AMP site. The segment at 129–135 (GRARGAD) is LID. Arg-130 is an ATP binding site. Arg-132 and Arg-144 together coordinate AMP. ATP is bound at residue Arg-172.

The protein belongs to the adenylate kinase family. Monomer.

It is found in the cytoplasm. The enzyme catalyses AMP + ATP = 2 ADP. The protein operates within purine metabolism; AMP biosynthesis via salvage pathway; AMP from ADP: step 1/1. Its function is as follows. Catalyzes the reversible transfer of the terminal phosphate group between ATP and AMP. Plays an important role in cellular energy homeostasis and in adenine nucleotide metabolism. This is Adenylate kinase from Campylobacter concisus (strain 13826).